The sequence spans 987 residues: UvrABC system protein A (987 aa).

An ATP-binding site is contributed by 33 to 40; it reads GLSGSGKS. The segment at 255–282 adopts a C4-type zinc-finger fold; it reads CPVCDYSLPELEPRLFSFNAPVGACPSC. ABC transporter domains are found at residues 312–589 and 609–938; these read WDRR…PRSL and PNPK…QFLA. Residue 642 to 649 participates in ATP binding; it reads GVSGSGKS. Residues 741 to 767 form a C4-type zinc finger; it reads CEACQGDGMIKVEMHFLPDVYVPCDVC. The disordered stretch occupies residues 948-987; the sequence is ETRPAAMANKPDARPPRKVKPEKVAKAAKSATKKTAKKAS. Residues 958–972 show a composition bias toward basic and acidic residues; it reads PDARPPRKVKPEKVA. The span at 978 to 987 shows a compositional bias: basic residues; it reads ATKKTAKKAS.

This sequence belongs to the ABC transporter superfamily. UvrA family. As to quaternary structure, forms a heterotetramer with UvrB during the search for lesions.

It is found in the cytoplasm. Functionally, the UvrABC repair system catalyzes the recognition and processing of DNA lesions. UvrA is an ATPase and a DNA-binding protein. A damage recognition complex composed of 2 UvrA and 2 UvrB subunits scans DNA for abnormalities. When the presence of a lesion has been verified by UvrB, the UvrA molecules dissociate. The protein is UvrABC system protein A of Xanthomonas axonopodis pv. citri (strain 306).